The chain runs to 241 residues: Protein TraL (241 aa).

This sequence to plasmid IncP-alpha RP4 TraL.

This Escherichia coli protein is Protein TraL (traL).